Consider the following 90-residue polypeptide: Neurotoxin LmNaTx19 (90 aa).

Positions 1-19 (MNHLILIVAMCLMVIGVQC) are cleaved as a signal peptide. In terms of domain architecture, LCN-type CS-alpha/beta spans 21–80 (KDGYLYDDVDCKFSCWDNEYCRKLCKSKKAVGGYCWRWRFSCYCTGLPDNEKTEGTYKCG). 4 disulfides stabilise this stretch: C31/C79, C35/C55, C41/C62, and C45/C64.

This sequence belongs to the long (4 C-C) scorpion toxin superfamily. Sodium channel inhibitor family. Alpha subfamily. In terms of tissue distribution, expressed by the venom gland.

The protein localises to the secreted. Functionally, binds voltage-independently at site-3 of voltage-gated sodium channels (Nav) and inhibits the inactivation of the activated channels, thereby blocking neuronal transmission. The protein is Neurotoxin LmNaTx19 of Lychas mucronatus (Chinese swimming scorpion).